We begin with the raw amino-acid sequence, 118 residues long: Small ribosomal subunit protein uS13 (118 aa).

The tract at residues 94-118 (SLPVRGQRTKTNARTRKGPRKAIKK) is disordered.

Belongs to the universal ribosomal protein uS13 family. Part of the 30S ribosomal subunit. Forms a loose heterodimer with protein S19. Forms two bridges to the 50S subunit in the 70S ribosome.

Its function is as follows. Located at the top of the head of the 30S subunit, it contacts several helices of the 16S rRNA. In the 70S ribosome it contacts the 23S rRNA (bridge B1a) and protein L5 of the 50S subunit (bridge B1b), connecting the 2 subunits; these bridges are implicated in subunit movement. Contacts the tRNAs in the A and P-sites. The polypeptide is Small ribosomal subunit protein uS13 (Aeromonas hydrophila subsp. hydrophila (strain ATCC 7966 / DSM 30187 / BCRC 13018 / CCUG 14551 / JCM 1027 / KCTC 2358 / NCIMB 9240 / NCTC 8049)).